The sequence spans 228 residues: Ion-translocating oxidoreductase complex subunit G (228 aa).

Residues 35–55 traverse the membrane as a helical segment; that stretch reads ALSLGLVCALVAVALLLGNQL. FMN phosphoryl threonine is present on Thr-197.

Belongs to the RnfG family. In terms of assembly, the complex is composed of six subunits: RnfA, RnfB, RnfC, RnfD, RnfE and RnfG. FMN is required as a cofactor.

It is found in the cell inner membrane. Functionally, part of a membrane-bound complex that couples electron transfer with translocation of ions across the membrane. In Stutzerimonas stutzeri (Pseudomonas stutzeri), this protein is Ion-translocating oxidoreductase complex subunit G.